The following is a 285-amino-acid chain: Putative ankyrin repeat protein R551 (285 aa).

4 ANK repeats span residues 99–129 (DLKS…PIKI), 157–186 (NDFD…LQDE), 188–214 (IGKI…EAFR), and 215–249 (SAPD…CIQQ).

This chain is Putative ankyrin repeat protein R551, found in Acanthamoeba polyphaga (Amoeba).